Here is a 510-residue protein sequence, read N- to C-terminus: MGLISGILFGIIFGVALMAGWSRMMTHRSSKRVAKAVDMKLLGSLSRDDLKKICGDNFPQWISFPAFEQVKWLNKLLSKMWPYIAEAATMVIRDSVEPLLEDYRPPGITSLKFSKLTLGNVAPKIEGIRVQSFKEGQVTMDVDLRWGGDPNIVLGVTALVASIPIQLKDLQVFTVARVIFQLADEIPCISAVVVALLAEPKPRIDYTLKAVGGSLTAIPGLSDMIDDTVDTIVKDMLQWPHRIVVPIGGIPVDLSDLELKPQGKLIVTVVKATNLKNKELIGKSDPYATIYIRPVFKYKTKAIENNLNPVWDQTFELIAEDKETQSLTVEVFDKDVGQDERLGLVKLPLSSLEAGVTKELELNLLSSLDTLKVKDKKDRGSITLKVHYHEFNKEEQMAALEDEKKIMEERKRLKEAGVIGSTMDAVGMVGSGLGAGVGMVGTGIGTGVGLVGSGVSSGVGMVGSGFGAVGSGLSKAGRFMGRTITGQSSKRSGSSTPVNTVPENDGAKQQ.

The helical transmembrane segment at 1 to 21 (MGLISGILFGIIFGVALMAGW) threads the bilayer. SMP-LTD domains are found at residues 66–248 (AFEQ…VPIG) and 66–250 (AFEQ…IGGI). The interval 226–488 (DDTVDTIVKD…FMGRTITGQS (263 aa)) is phospholipid binding. C2 domains lie at 242 to 362 (RIVV…ELEL) and 246 to 364 (PIGG…ELNL). Ca(2+) is bound by residues lysine 278, glutamate 279, aspartate 285, aspartate 333, lysine 334, aspartate 335, aspartate 339, and glutamate 340. The stretch at 390 to 417 (EFNKEEQMAALEDEKKIMEERKRLKEAG) forms a coiled coil. In terms of domain architecture, C2 3 spans 461-500 (MVGSGFGAVGSGLSKAGRFMGRTITGQSSKRSGSSTPVNT). The tract at residues 484 to 510 (ITGQSSKRSGSSTPVNTVPENDGAKQQ) is disordered.

It belongs to the synaptotagmin family. Interacts with the biotrophic pathogenic fungi Microbotryum violaceum effector MVLG_01732. The cofactor is Ca(2+). In terms of tissue distribution, mostly expressed in rosette leaves and flowers, to lower extent, in cauline leaves, roots and stems, and, at low levels, in siliques.

The protein localises to the nucleus membrane. Functionally, may be involved in membrane trafficking. Acts as a repressor of abiotic stress (e.g. drought and salt) responses by binding specifically to the promoter of THAS1 to regulate its transcription. Binds to membrane lipid ceramides. This is Calcium-dependent lipid-binding protein from Arabidopsis thaliana (Mouse-ear cress).